Consider the following 410-residue polypeptide: Arginine deiminase (410 aa).

Cys-399 (amidino-cysteine intermediate) is an active-site residue.

It belongs to the arginine deiminase family.

The protein localises to the cytoplasm. The catalysed reaction is L-arginine + H2O = L-citrulline + NH4(+). It functions in the pathway amino-acid degradation; L-arginine degradation via ADI pathway; carbamoyl phosphate from L-arginine: step 1/2. In Listeria monocytogenes serotype 4a (strain HCC23), this protein is Arginine deiminase.